The sequence spans 314 residues: tRNA dimethylallyltransferase (314 aa).

An ATP-binding site is contributed by 15 to 22 (GPTATGKS). 17 to 22 (TATGKS) is a binding site for substrate. Positions 40–43 (DSML) are interaction with substrate tRNA.

It belongs to the IPP transferase family. As to quaternary structure, monomer. It depends on Mg(2+) as a cofactor.

It catalyses the reaction adenosine(37) in tRNA + dimethylallyl diphosphate = N(6)-dimethylallyladenosine(37) in tRNA + diphosphate. Catalyzes the transfer of a dimethylallyl group onto the adenine at position 37 in tRNAs that read codons beginning with uridine, leading to the formation of N6-(dimethylallyl)adenosine (i(6)A). This Pelotomaculum thermopropionicum (strain DSM 13744 / JCM 10971 / SI) protein is tRNA dimethylallyltransferase.